Reading from the N-terminus, the 85-residue chain is Large ribosomal subunit protein bL27 (85 aa).

This sequence belongs to the bacterial ribosomal protein bL27 family.

The chain is Large ribosomal subunit protein bL27 from Stutzerimonas stutzeri (strain A1501) (Pseudomonas stutzeri).